A 301-amino-acid chain; its full sequence is Porphobilinogen deaminase (301 aa).

S-(dipyrrolylmethanemethyl)cysteine is present on Cys-242.

The protein belongs to the HMBS family. In terms of assembly, monomer. Dipyrromethane serves as cofactor.

It catalyses the reaction 4 porphobilinogen + H2O = hydroxymethylbilane + 4 NH4(+). It participates in porphyrin-containing compound metabolism; protoporphyrin-IX biosynthesis; coproporphyrinogen-III from 5-aminolevulinate: step 2/4. Tetrapolymerization of the monopyrrole PBG into the hydroxymethylbilane pre-uroporphyrinogen in several discrete steps. The sequence is that of Porphobilinogen deaminase from Rickettsia akari (strain Hartford).